The following is a 740-amino-acid chain: Elongation factor 2 (740 aa).

The region spanning 23 to 264 (AQIRNAGTLA…MIIEHVPPPN (242 aa)) is the tr-type G domain. GTP contacts are provided by residues 32–39 (AHVDHGKT), 98–102 (DTPGH), and 152–155 (NKID). Residue His-605 is modified to Diphthamide.

Belongs to the TRAFAC class translation factor GTPase superfamily. Classic translation factor GTPase family. EF-G/EF-2 subfamily.

The protein resides in the cytoplasm. Its function is as follows. Catalyzes the GTP-dependent ribosomal translocation step during translation elongation. During this step, the ribosome changes from the pre-translocational (PRE) to the post-translocational (POST) state as the newly formed A-site-bound peptidyl-tRNA and P-site-bound deacylated tRNA move to the P and E sites, respectively. Catalyzes the coordinated movement of the two tRNA molecules, the mRNA and conformational changes in the ribosome. This chain is Elongation factor 2, found in Pyrobaculum neutrophilum (strain DSM 2338 / JCM 9278 / NBRC 100436 / V24Sta) (Thermoproteus neutrophilus).